A 460-amino-acid chain; its full sequence is Chromosomal replication initiator protein DnaA (460 aa).

The segment at 1–84 is domain I, interacts with DnaA modulators; the sequence is MAVSLWQQCI…RFDIGSRPSA (84 aa). The segment at 84-123 is domain II; the sequence is AKKPEPAPVAAVRVPSPQTKASVGTAFNTTEPVANTNHRS. The interval 124-340 is domain III, AAA+ region; it reads NINPTYQFDN…GALNRVIANA (217 aa). Gly-168, Gly-170, Lys-171, and Thr-172 together coordinate ATP. A domain IV, binds dsDNA region spans residues 341–460; the sequence is NFTGRPITID…YANLIRTLSS (120 aa).

This sequence belongs to the DnaA family. Oligomerizes as a right-handed, spiral filament on DNA at oriC.

It localises to the cytoplasm. Plays an essential role in the initiation and regulation of chromosomal replication. ATP-DnaA binds to the origin of replication (oriC) to initiate formation of the DNA replication initiation complex once per cell cycle. Binds the DnaA box (a 9 base pair repeat at the origin) and separates the double-stranded (ds)DNA. Forms a right-handed helical filament on oriC DNA; dsDNA binds to the exterior of the filament while single-stranded (ss)DNA is stabiized in the filament's interior. The ATP-DnaA-oriC complex binds and stabilizes one strand of the AT-rich DNA unwinding element (DUE), permitting loading of DNA polymerase. After initiation quickly degrades to an ADP-DnaA complex that is not apt for DNA replication. Binds acidic phospholipids. In Shewanella oneidensis (strain ATCC 700550 / JCM 31522 / CIP 106686 / LMG 19005 / NCIMB 14063 / MR-1), this protein is Chromosomal replication initiator protein DnaA.